Here is a 535-residue protein sequence, read N- to C-terminus: Putative subtilisin-like proteinase 2 (535 aa).

An N-terminal signal peptide occupies residues 1–17 (MFFVGVAVLAALQSVWG). In terms of domain architecture, Peptidase S8 spans 221–475 (NWIFRVLQIK…IPRLGCKGRI (255 aa)). Residues Asp255 and His277 each act as charge relay system in the active site. An intrachain disulfide couples Cys369 to Cys400. Ser420 (charge relay system) is an active-site residue. The chain crosses the membrane as a helical span at residues 489–509 (IVPLVFVVLITSALLYLLLIG).

It belongs to the peptidase S8 family.

It is found in the membrane. May be involved in the degradation of proteins for nutrient acquisition or possess a regulatory function by proteolytic activation of proproteins. The polypeptide is Putative subtilisin-like proteinase 2 (SPL2) (Encephalitozoon cuniculi (strain GB-M1) (Microsporidian parasite)).